The chain runs to 121 residues: Small ribosomal subunit protein uS13 (121 aa).

Positions 89 to 121 (MRHRRGLPVRGQHTKNNARTRKGKKVSIAGRKK) are disordered.

The protein belongs to the universal ribosomal protein uS13 family. In terms of assembly, part of the 30S ribosomal subunit. Forms a loose heterodimer with protein S19. Forms two bridges to the 50S subunit in the 70S ribosome.

In terms of biological role, located at the top of the head of the 30S subunit, it contacts several helices of the 16S rRNA. In the 70S ribosome it contacts the 23S rRNA (bridge B1a) and protein L5 of the 50S subunit (bridge B1b), connecting the 2 subunits; these bridges are implicated in subunit movement. Contacts the tRNAs in the A and P-sites. This chain is Small ribosomal subunit protein uS13, found in Pediococcus pentosaceus (strain ATCC 25745 / CCUG 21536 / LMG 10740 / 183-1w).